Reading from the N-terminus, the 236-residue chain is 2-C-methyl-D-erythritol 4-phosphate cytidylyltransferase (236 aa).

This sequence belongs to the IspD/TarI cytidylyltransferase family. IspD subfamily.

It catalyses the reaction 2-C-methyl-D-erythritol 4-phosphate + CTP + H(+) = 4-CDP-2-C-methyl-D-erythritol + diphosphate. The protein operates within isoprenoid biosynthesis; isopentenyl diphosphate biosynthesis via DXP pathway; isopentenyl diphosphate from 1-deoxy-D-xylulose 5-phosphate: step 2/6. In terms of biological role, catalyzes the formation of 4-diphosphocytidyl-2-C-methyl-D-erythritol from CTP and 2-C-methyl-D-erythritol 4-phosphate (MEP). This is 2-C-methyl-D-erythritol 4-phosphate cytidylyltransferase from Pseudomonas syringae pv. syringae (strain B728a).